Consider the following 122-residue polypeptide: Large ribosomal subunit protein bL12 (122 aa).

Belongs to the bacterial ribosomal protein bL12 family. In terms of assembly, homodimer. Part of the ribosomal stalk of the 50S ribosomal subunit. Forms a multimeric L10(L12)X complex, where L10 forms an elongated spine to which 2 to 4 L12 dimers bind in a sequential fashion. Binds GTP-bound translation factors.

In terms of biological role, forms part of the ribosomal stalk which helps the ribosome interact with GTP-bound translation factors. Is thus essential for accurate translation. The protein is Large ribosomal subunit protein bL12 of Xanthomonas oryzae pv. oryzae (strain MAFF 311018).